The sequence spans 356 residues: Arginine kinase 1 (356 aa).

A Phosphagen kinase N-terminal domain is found at 6-91; sequence VLAKLEEGYA…FDPIIEDYHG (86 aa). Substrate is bound at residue 64–68; the sequence is GVGIY. Residues 119–356 form the Phosphagen kinase C-terminal domain; it reads YVISTRVRCG…TELIKLEKSL (238 aa). ATP contacts are provided by residues 122-126 and histidine 185; that span reads STRVR. Glutamate 225 serves as a coordination point for substrate. An ATP-binding site is contributed by arginine 229. A substrate-binding site is contributed by cysteine 271. ATP contacts are provided by residues 280–284 and 309–314; these read RASVH and RGTRGE. Glutamate 314 serves as a coordination point for substrate.

Belongs to the ATP:guanido phosphotransferase family.

The enzyme catalyses L-arginine + ATP = N(omega)-phospho-L-arginine + ADP + H(+). The chain is Arginine kinase 1 from Drosophila melanogaster (Fruit fly).